The sequence spans 167 residues: Peptidyl-prolyl cis-trans isomerase-like 3 (167 aa).

Residues 1–160 (MSVTLHTTLG…EEVRIERVTV (160 aa)) form the PPIase cyclophilin-type domain.

It belongs to the cyclophilin-type PPIase family. PPIL3 subfamily.

The catalysed reaction is [protein]-peptidylproline (omega=180) = [protein]-peptidylproline (omega=0). Its function is as follows. PPIases accelerate the folding of proteins. It catalyzes the cis-trans isomerization of proline imidic peptide bonds in oligopeptides. The polypeptide is Peptidyl-prolyl cis-trans isomerase-like 3 (cyp-10) (Neurospora crassa (strain ATCC 24698 / 74-OR23-1A / CBS 708.71 / DSM 1257 / FGSC 987)).